The following is a 240-amino-acid chain: Putative RING finger protein ORF96 (240 aa).

The RING-type 1 zinc finger occupies 9-44 (CVVCMEEKPLVVFEPCMHHNCCESCSGHVSNCPYCR). The segment at 150-202 (CVICKKEIKEEVGKTYMHACCTATICKPCAKAILKAMVEKEITENLPFCPYCF) adopts an RING-type 2; degenerate zinc-finger fold.

In Ostreid herpesvirus 1 (isolate France) (OsHV-1), this protein is Putative RING finger protein ORF96.